We begin with the raw amino-acid sequence, 172 residues long: Achaete-scute homolog 4 (172 aa).

In terms of domain architecture, bHLH spans 72–124; the sequence is AFLRKRNERERQRVRCVNEGYARLRDHLPRELADKRLSKVETLRAAIDYIKHL. Positions 144-172 are disordered; sequence QRRAECNSDGESKASSAPSPSSEPEEGGS. Over residues 145-155 the composition is skewed to basic and acidic residues; sequence RRAECNSDGES. Over residues 156–165 the composition is skewed to low complexity; the sequence is KASSAPSPSS.

In terms of tissue distribution, expressed in skin. 7-fold higher expression in fetal skin than in adult skin. Weak expression also detected in fetal lung, aorta and brain, and in adult stomach, kidney, ovary and breast.

The protein localises to the nucleus. Its function is as follows. Could be a transcriptional regulator involved in skin development. This chain is Achaete-scute homolog 4 (ASCL4), found in Homo sapiens (Human).